Here is a 238-residue protein sequence, read N- to C-terminus: Purine nucleoside phosphorylase DeoD-type (238 aa).

Position 4 (histidine 4) interacts with a purine D-ribonucleoside. Phosphate-binding positions include glycine 20, arginine 24, arginine 43, and 87–90 (RVGS). A purine D-ribonucleoside contacts are provided by residues 179 to 181 (EME) and 203 to 204 (SD). The Proton donor role is filled by aspartate 204.

It belongs to the PNP/UDP phosphorylase family. As to quaternary structure, homohexamer; trimer of homodimers.

The catalysed reaction is a purine D-ribonucleoside + phosphate = a purine nucleobase + alpha-D-ribose 1-phosphate. It catalyses the reaction a purine 2'-deoxy-D-ribonucleoside + phosphate = a purine nucleobase + 2-deoxy-alpha-D-ribose 1-phosphate. Functionally, catalyzes the reversible phosphorolytic breakdown of the N-glycosidic bond in the beta-(deoxy)ribonucleoside molecules, with the formation of the corresponding free purine bases and pentose-1-phosphate. The protein is Purine nucleoside phosphorylase DeoD-type of Pasteurella multocida (strain Pm70).